Here is a 494-residue protein sequence, read N- to C-terminus: UDP-N-acetylmuramate--L-alanine ligase (494 aa).

140-146 (GTHGKTT) lines the ATP pocket.

Belongs to the MurCDEF family.

The protein resides in the cytoplasm. The catalysed reaction is UDP-N-acetyl-alpha-D-muramate + L-alanine + ATP = UDP-N-acetyl-alpha-D-muramoyl-L-alanine + ADP + phosphate + H(+). It participates in cell wall biogenesis; peptidoglycan biosynthesis. Functionally, cell wall formation. The polypeptide is UDP-N-acetylmuramate--L-alanine ligase (Nostoc sp. (strain PCC 7120 / SAG 25.82 / UTEX 2576)).